We begin with the raw amino-acid sequence, 143 residues long: Mannitol-specific phosphotransferase enzyme IIA component (143 aa).

One can recognise a PTS EIIA type-2 domain in the interval 1-142; that stretch reads MKLLKNNIYI…DKVLEFLAKH (142 aa). Catalysis depends on H61, which acts as the Tele-phosphohistidine intermediate. The residue at position 61 (H61) is a Phosphohistidine; by HPr.

It localises to the cytoplasm. In terms of biological role, the phosphoenolpyruvate-dependent sugar phosphotransferase system (sugar PTS), a major carbohydrate active transport system, catalyzes the phosphorylation of incoming sugar substrates concomitantly with their translocation across the cell membrane. The enzyme II CmtAB PTS system is involved in D-mannitol transport. This Mycoplasma pneumoniae (strain ATCC 29342 / M129 / Subtype 1) (Mycoplasmoides pneumoniae) protein is Mannitol-specific phosphotransferase enzyme IIA component (mtlF).